We begin with the raw amino-acid sequence, 154 residues long: 17 kDa A-type inclusion protein (154 aa).

Residues 17 to 85 are a coiled coil; that stretch reads QKDCSDKLDR…YKRELERDRY (69 aa). A disordered region spans residues 88 to 154; sequence SRYLTSSSDP…DVEPEHPPAF (67 aa).

This Bos taurus (Bovine) protein is 17 kDa A-type inclusion protein.